A 143-amino-acid chain; its full sequence is Large ribosomal subunit protein uL15 (143 aa).

The interval 1 to 52 (MKLNTLAPAAGSKSAPKRLGRGIGSGLGKTSGKGHKGQKARSGGYHKVGFEG) is disordered. Residues 21–31 (RGIGSGLGKTS) are compositionally biased toward gly residues.

This sequence belongs to the universal ribosomal protein uL15 family. As to quaternary structure, part of the 50S ribosomal subunit.

In terms of biological role, binds to the 23S rRNA. The protein is Large ribosomal subunit protein uL15 of Francisella tularensis subsp. tularensis (strain FSC 198).